A 122-amino-acid polypeptide reads, in one-letter code: Large ribosomal subunit protein uL14 (122 aa).

This sequence belongs to the universal ribosomal protein uL14 family. As to quaternary structure, part of the 50S ribosomal subunit. Forms a cluster with proteins L3 and L19. In the 70S ribosome, L14 and L19 interact and together make contacts with the 16S rRNA in bridges B5 and B8.

Functionally, binds to 23S rRNA. Forms part of two intersubunit bridges in the 70S ribosome. The chain is Large ribosomal subunit protein uL14 from Corynebacterium diphtheriae (strain ATCC 700971 / NCTC 13129 / Biotype gravis).